The following is a 342-amino-acid chain: Probable tyrosine--tRNA ligase, cytoplasmic (342 aa).

Y48 is an L-tyrosine binding site. The 'HIGH' region signature appears at 53-61; the sequence is ITGKPHIGY. L-tyrosine contacts are provided by Y175, Q179, D182, and Q197. Positions 231 to 235 match the 'KMSKS' region motif; it reads KMSSS.

Belongs to the class-I aminoacyl-tRNA synthetase family. Homodimer.

It is found in the cytoplasm. It catalyses the reaction tRNA(Tyr) + L-tyrosine + ATP = L-tyrosyl-tRNA(Tyr) + AMP + diphosphate + H(+). In Enterocytozoon bieneusi (strain H348) (Microsporidian parasite), this protein is Probable tyrosine--tRNA ligase, cytoplasmic.